Consider the following 223-residue polypeptide: UPF0758 protein Tgr7_0100 (223 aa).

The MPN domain occupies 102-223; the sequence is ALTSPDDTRR…LVSFAERGLL (122 aa). The Zn(2+) site is built by histidine 173, histidine 175, and aspartate 186. Residues 173–186 carry the JAMM motif motif; the sequence is HNHPSGVAEPSRSD.

The protein belongs to the UPF0758 family.

The sequence is that of UPF0758 protein Tgr7_0100 from Thioalkalivibrio sulfidiphilus (strain HL-EbGR7).